Reading from the N-terminus, the 113-residue chain is MHELSLCQSAVEIIQRQAEQHDVKRVTAVWLEIGALSCVEESAVRFSFEIVCHGTVAQGCDLHIVYKPAQAWCWDCSQVVEIHQHDAQCPICHGERLRVDTGDSLIVKSIEVE.

The Ni(2+) site is built by H2 and E3. Zn(2+)-binding residues include C73, C76, C89, and C92.

Belongs to the HypA/HybF family. HybF subfamily.

Its function is as follows. Involved in the maturation of [NiFe] hydrogenases. Required for nickel insertion into the metal center of the hydrogenase. This chain is Hydrogenase maturation factor HybF, found in Escherichia coli O6:H1 (strain CFT073 / ATCC 700928 / UPEC).